A 96-amino-acid polypeptide reads, in one-letter code: Transcription and mRNA export factor SUS1 (96 aa).

The protein belongs to the ENY2 family. In terms of assembly, component of the nuclear pore complex (NPC)-associated TREX-2 complex (transcription and export complex 2), composed of at least SUS1, SAC3, THP1, SEM1, and CDC31. TREX-2 contains 2 SUS1 chains. The TREX-2 complex interacts with the nucleoporin NUP1. Component of the 1.8 MDa SAGA transcription coactivator-HAT complex. SAGA is built of 5 distinct domains with specialized functions. Within the SAGA complex, SUS1, SGF11, SGF73 and UBP8 form an additional subcomplex of SAGA called the DUB module (deubiquitination module). Interacts directly with THP1, SAC3, SGF11, and with the RNA polymerase II.

The protein localises to the nucleus. Its subcellular location is the nucleoplasm. The protein resides in the cytoplasm. It localises to the P-body. Functionally, involved in mRNA export coupled transcription activation by association with both the TREX-2 and the SAGA complexes. At the promoters, SAGA is required for recruitment of the basal transcription machinery. It influences RNA polymerase II transcriptional activity through different activities such as TBP interaction and promoter selectivity, interaction with transcription activators, and chromatin modification through histone acetylation and deubiquitination. Within the SAGA complex, participates in a subcomplex required for deubiquitination of H2B and for the maintenance of steady-state H3 methylation levels. The TREX-2 complex functions in docking export-competent ribonucleoprotein particles (mRNPs) to the nuclear entrance of the nuclear pore complex (nuclear basket). TREX-2 participates in mRNA export and accurate chromatin positioning in the nucleus by tethering genes to the nuclear periphery. May also be involved in cytoplasmic mRNA decay by interaction with components of P-bodies. In Kluyveromyces lactis (strain ATCC 8585 / CBS 2359 / DSM 70799 / NBRC 1267 / NRRL Y-1140 / WM37) (Yeast), this protein is Transcription and mRNA export factor SUS1.